An 813-amino-acid polypeptide reads, in one-letter code: Phosphoribosylformylglycinamidine synthase subunit PurL (813 aa).

Residue histidine 56 is part of the active site. Residues tyrosine 59 and lysine 103 each contribute to the ATP site. Position 105 (glutamate 105) interacts with Mg(2+). Residues 106–109 (SHNH) and arginine 128 each bind substrate. Histidine 107 serves as the catalytic Proton acceptor. Aspartate 129 serves as a coordination point for Mg(2+). Glutamine 253 serves as a coordination point for substrate. Aspartate 281 lines the Mg(2+) pocket. 325-327 (ESQ) lines the substrate pocket. Residues asparagine 511 and glycine 548 each coordinate ATP. Residue asparagine 549 coordinates Mg(2+). Residue serine 551 coordinates substrate.

Belongs to the FGAMS family. In terms of assembly, monomer. Part of the FGAM synthase complex composed of 1 PurL, 1 PurQ and 2 PurS subunits.

The protein localises to the cytoplasm. It catalyses the reaction N(2)-formyl-N(1)-(5-phospho-beta-D-ribosyl)glycinamide + L-glutamine + ATP + H2O = 2-formamido-N(1)-(5-O-phospho-beta-D-ribosyl)acetamidine + L-glutamate + ADP + phosphate + H(+). The protein operates within purine metabolism; IMP biosynthesis via de novo pathway; 5-amino-1-(5-phospho-D-ribosyl)imidazole from N(2)-formyl-N(1)-(5-phospho-D-ribosyl)glycinamide: step 1/2. Its function is as follows. Part of the phosphoribosylformylglycinamidine synthase complex involved in the purines biosynthetic pathway. Catalyzes the ATP-dependent conversion of formylglycinamide ribonucleotide (FGAR) and glutamine to yield formylglycinamidine ribonucleotide (FGAM) and glutamate. The FGAM synthase complex is composed of three subunits. PurQ produces an ammonia molecule by converting glutamine to glutamate. PurL transfers the ammonia molecule to FGAR to form FGAM in an ATP-dependent manner. PurS interacts with PurQ and PurL and is thought to assist in the transfer of the ammonia molecule from PurQ to PurL. The sequence is that of Phosphoribosylformylglycinamidine synthase subunit PurL from Corynebacterium jeikeium (strain K411).